Consider the following 221-residue polypeptide: MGQKSSKVHITKTDRAILEVKRSKDEIHKFTRRTDNLILVEKSQLKDLIRKNPENYKSNMKVRFLLKRIHYQEHLLQQASDQLINLENMVSTLEFKMVEKQFINGLKNGNEILKKLNKEFSNVDELMDDVQDQIAYQNEINETLSRSLVGTSNYEDDLDKELDALESELNPEKMNNAKVANMPSTEGLPSLPQGEQTEQKEREEFATEERSDTKEPLALLS.

Glycine 2 carries N-myristoyl glycine lipidation. The stretch at 72-178 (QEHLLQQASD…LNPEKMNNAK (107 aa)) forms a coiled coil. The tract at residues 170-221 (NPEKMNNAKVANMPSTEGLPSLPQGEQTEQKEREEFATEERSDTKEPLALLS) is disordered. A compositionally biased stretch (basic and acidic residues) spans 197-215 (TEQKEREEFATEERSDTKE).

This sequence belongs to the SNF7 family. As to quaternary structure, core component of the ESCRT-III complex (endosomal sorting required for transport complex III). ESCRT-III appears to be sequentially assembled as a flat lattice on the endosome membrane and forms a transient 450 kDa complex that contains DID4, oligomerized SNF7, VPS20 and VPS24. SNF7 oligomerization into a membrane-associated filament is nucleated by association of SNF7 with VPS20; the process is terminated through association of VPS24, possibly by capping the SNF7 filament. VPS24 subsequently associates with DID4/VPS2. Interacts with the VPS4. Interacts with VPS25; the interaction mediates the association with the ESCRT-II complex.

The protein localises to the endosome membrane. Its subcellular location is the vacuole membrane. Its function is as follows. Class E VPS protein implicated in concentration and sorting of cargo proteins of the multivesicular body (MVB) for incorporation into intralumenal vesicles. The lumenal sequestrated membrane proteins will be targeted into the vacuole after fusion of the endosome with the vacuole. Acts a component of the ESCRT-III complex, which appears to be critical for late steps in MVB sorting, such as membrane invagination and final cargo sorting and recruitment of late-acting components of the sorting machinery. The MVB pathway requires the sequential function of ESCRT-O, -I,-II and -III complex assemblies. Required for the oligomerization of SNF7 into a membrane-associated filament. The VPS20-SNF7 subcomplex is responsible for the membrane association of the ESCRT-III complex. Also required for the RIM101 repressor proteolytic activation. In Saccharomyces cerevisiae (strain ATCC 204508 / S288c) (Baker's yeast), this protein is Vacuolar protein sorting-associated protein 20 (VPS20).